The sequence spans 876 residues: Paramyosin (876 aa).

A nonhelical region region spans residues 1 to 28 (MSARSAKFMYRSGNAGASGDLSVEYGTD). A coiled-coil region spans residues 29–855 (LGALTRLEDK…IRAKHRSWVT (827 aa)). The segment at 856-876 (TSQVPGGTRQVFVTQEEQSNY) is nonhelical region.

It belongs to the paramyosin family. As to quaternary structure, homodimer.

It is found in the cytoplasm. The protein localises to the myofibril. Paramyosin is a major structural component of many thick filaments isolated from invertebrate muscles. This chain is Paramyosin, found in Sarcoptes scabiei (Itch mite).